Reading from the N-terminus, the 88-residue chain is Small ribosomal subunit protein uS17 (88 aa).

Belongs to the universal ribosomal protein uS17 family. In terms of assembly, part of the 30S ribosomal subunit.

In terms of biological role, one of the primary rRNA binding proteins, it binds specifically to the 5'-end of 16S ribosomal RNA. In Levilactobacillus brevis (strain ATCC 367 / BCRC 12310 / CIP 105137 / JCM 1170 / LMG 11437 / NCIMB 947 / NCTC 947) (Lactobacillus brevis), this protein is Small ribosomal subunit protein uS17.